The sequence spans 405 residues: Arrestin red cell isoform 2 (405 aa).

This sequence belongs to the arrestin family.

It is found in the cytoplasm. The protein is Arrestin red cell isoform 2 of Oncorhynchus mykiss (Rainbow trout).